Here is an 876-residue protein sequence, read N- to C-terminus: Phosphoenolpyruvate carboxylase (876 aa).

Catalysis depends on residues H138 and K543.

This sequence belongs to the PEPCase type 1 family. It depends on Mg(2+) as a cofactor.

The enzyme catalyses oxaloacetate + phosphate = phosphoenolpyruvate + hydrogencarbonate. Functionally, forms oxaloacetate, a four-carbon dicarboxylic acid source for the tricarboxylic acid cycle. In Aliivibrio salmonicida (strain LFI1238) (Vibrio salmonicida (strain LFI1238)), this protein is Phosphoenolpyruvate carboxylase.